Reading from the N-terminus, the 164-residue chain is Putative pre-16S rRNA nuclease (164 aa).

Belongs to the YqgF nuclease family.

The protein resides in the cytoplasm. Functionally, could be a nuclease involved in processing of the 5'-end of pre-16S rRNA. The chain is Putative pre-16S rRNA nuclease from Caulobacter sp. (strain K31).